We begin with the raw amino-acid sequence, 453 residues long: Nuclear hormone receptor family member nhr-12 (453 aa).

A disordered region spans residues 1–37; sequence MEQIPQEQKTEPFLASFTTTEKLGTETPTTSITPNTQ. Residues 18–36 are compositionally biased toward low complexity; sequence TTTEKLGTETPTTSITPNT. Positions 44-119 form a DNA-binding region, nuclear receptor; it reads KPNCAVCNEV…VGMNPECVQN (76 aa). 2 NR C4-type zinc fingers span residues 47-67 and 83-107; these read CAVC…CRAC and CRAG…YDKC. The region spanning 178 to 451 is the NR LBD domain; it reads FSPASLPGLS…ENFVNIINGK (274 aa).

It belongs to the nuclear hormone receptor family.

It localises to the nucleus. Orphan nuclear receptor. This Caenorhabditis elegans protein is Nuclear hormone receptor family member nhr-12 (nhr-12).